A 500-amino-acid chain; its full sequence is MAIFDNYEVWFVIGSQHLYGPETLRQVTQHAEHVVNALNTEAKLPCKLVLKPLGTTPDEITAICRDANYDDRCAGLVVWLHTFSPAKMWINGLTMLNKPLLQFHTQFNAALPWDSIDMDFMNLNQTAHGGREFGFIGARMRQQHAVVTGHWQDKQAHERIGSWMRQAVSKQDTRHLKVCRFGDNMREVAVTDGDKVAAQIKFGFSVNTRAVGDLVQVVNSISDGDVNALVDEYESCYTMTPATQIHGEKRQNVLEAARIELGMKRFLEQGGFHAFTTTFEDLHGLKQLPGLPVQRLMQQGYGFAGEGDWKTAALLRIMKVMSTGLQGGTSFMEDYTYHFEKGNDLVLGSHMLEVCPSIAVEEKPILDVQHLGIGGKDDPARLIFNTQTGPAIVASLIDLGDRYRLLVNCIDTVKTPHSLPKLPVANALWKAQPDLPTASEAWILAGGAHHTVFSHALNLNDMRQFAEMHDIEITVIDNDTRLPAFKDALRWNEVYYGFRR.

Residues Glu306, Glu333, His350, and His450 each coordinate Mn(2+).

It belongs to the arabinose isomerase family. Homohexamer. Requires Mn(2+) as cofactor.

The enzyme catalyses beta-L-arabinopyranose = L-ribulose. The protein operates within carbohydrate degradation; L-arabinose degradation via L-ribulose; D-xylulose 5-phosphate from L-arabinose (bacterial route): step 1/3. Catalyzes the conversion of L-arabinose to L-ribulose. The polypeptide is L-arabinose isomerase (Shigella flexneri serotype 5b (strain 8401)).